The chain runs to 295 residues: ATP synthase gamma chain (295 aa).

Belongs to the ATPase gamma chain family. F-type ATPases have 2 components, CF(1) - the catalytic core - and CF(0) - the membrane proton channel. CF(1) has five subunits: alpha(3), beta(3), gamma(1), delta(1), epsilon(1). CF(0) has three main subunits: a, b and c.

The protein resides in the cell inner membrane. Produces ATP from ADP in the presence of a proton gradient across the membrane. The gamma chain is believed to be important in regulating ATPase activity and the flow of protons through the CF(0) complex. This is ATP synthase gamma chain from Chlorobium phaeobacteroides (strain BS1).